Consider the following 529-residue polypeptide: MASEGGSVRHVIVVGAGPGGLSAAINLAGQGFRVTVVEKDAVPGGRMKGLTLGASGEYAVDTGPSILQLPGVLEQIFRRAARRLEDYVKLLPLDVNTRVHFWDGTHLDTTRHLDRMEAELAKFGPRQASALRQWMEDGREKYGIAYQKFICTSADNLGYYAPWRLAPTLRFKPWQTLYRQLDGFFHDDRVTYALAYPSKYLGLHPTTCSSVFSVIPFLELAFGVWHVEGGFRELSRGMMRCARDLGATFRMGTPVEKVRVDAGRAVGVKLVGGEVLDADAVVVNADLAYAARSLIPAEAREGSRLTDAALERAKYSCSTFMAYYGLDTVYADLPHHLIYLSESARRTDRDALEDRHVDLEDPPFYVCNPGVTDPSGAPAGHSTLYVLVPTPNTGRPVDWVKTEQALRERIPAMLEKVGLKGVREHIREERYFTAETWRDDFNVFRGAVFNLSHTWLQLGPLRPKVKNRDIEGLYFVGGGTHPGSGLLTIMESANIAADYLTREAGKGPLPGWPYVPPLEPESPVQARAG.

12-45 is a binding site for FAD; that stretch reads IVVGAGPGGLSAAINLAGQGFRVTVVEKDAVPGG.

This sequence belongs to the carotenoid/retinoid oxidoreductase family. The cofactor is FAD.

The enzyme catalyses all-trans-zeta-carotene + 2 A = all-trans-lycopene + 2 AH2. It participates in carotenoid biosynthesis; lycopene biosynthesis. Dehydrogenates carotenes in the trans conformation: converts all-trans-zeta-carotene into all-trans-lycopene, one of the last dehydrogenation steps of lycopene biosynthesis. The chain is All-trans-zeta-carotene desaturase (carC) from Myxococcus xanthus.